Reading from the N-terminus, the 185-residue chain is Ribosome-recycling factor (185 aa).

It belongs to the RRF family.

The protein resides in the cytoplasm. Responsible for the release of ribosomes from messenger RNA at the termination of protein biosynthesis. May increase the efficiency of translation by recycling ribosomes from one round of translation to another. The protein is Ribosome-recycling factor of Corynebacterium glutamicum (strain R).